A 313-amino-acid chain; its full sequence is Aspartate carbamoyltransferase catalytic subunit (313 aa).

The carbamoyl phosphate site is built by R55 and T56. K83 lines the L-aspartate pocket. The carbamoyl phosphate site is built by R105, H138, and Q141. Residues R171 and R225 each coordinate L-aspartate. Carbamoyl phosphate contacts are provided by G266 and P267.

This sequence belongs to the aspartate/ornithine carbamoyltransferase superfamily. ATCase family. Heterododecamer (2C3:3R2) of six catalytic PyrB chains organized as two trimers (C3), and six regulatory PyrI chains organized as three dimers (R2).

The enzyme catalyses carbamoyl phosphate + L-aspartate = N-carbamoyl-L-aspartate + phosphate + H(+). The protein operates within pyrimidine metabolism; UMP biosynthesis via de novo pathway; (S)-dihydroorotate from bicarbonate: step 2/3. In terms of biological role, catalyzes the condensation of carbamoyl phosphate and aspartate to form carbamoyl aspartate and inorganic phosphate, the committed step in the de novo pyrimidine nucleotide biosynthesis pathway. In Corynebacterium diphtheriae (strain ATCC 700971 / NCTC 13129 / Biotype gravis), this protein is Aspartate carbamoyltransferase catalytic subunit.